Here is a 241-residue protein sequence, read N- to C-terminus: Uridylate kinase (241 aa).

An ATP-binding site is contributed by 9–10 (GS). Gly-44 lines the UMP pocket. Positions 45 and 49 each coordinate ATP. Residues Asp-66 and 114–120 (VTPGQTT) contribute to the UMP site. Thr-140, Tyr-146, and Asp-149 together coordinate ATP. Residues 222 to 241 (TDVIPTGSEEPIYWTGSSDA) are disordered.

It belongs to the UMP kinase family. In terms of assembly, homohexamer.

It localises to the cytoplasm. The enzyme catalyses UMP + ATP = UDP + ADP. The protein operates within pyrimidine metabolism; CTP biosynthesis via de novo pathway; UDP from UMP (UMPK route): step 1/1. Its activity is regulated as follows. Inhibited by UTP. Functionally, catalyzes the reversible phosphorylation of UMP to UDP. This Halorubrum lacusprofundi (strain ATCC 49239 / DSM 5036 / JCM 8891 / ACAM 34) protein is Uridylate kinase.